We begin with the raw amino-acid sequence, 60 residues long: UPF0337 protein asr4653 (60 aa).

The protein belongs to the UPF0337 (CsbD) family.

The polypeptide is UPF0337 protein asr4653 (Nostoc sp. (strain PCC 7120 / SAG 25.82 / UTEX 2576)).